A 436-amino-acid chain; its full sequence is MSEARKLFIKTYGCQMNVYDSERMAEALGAKGYVLTEVAEEADMVLLNTCHIREKAAEKVYSDLGRLRPLKTAKPDLKIGVAGCVAQAEGEEILKRMPLVDLVVGPQSYHRLPDMLDRTEGGARVVDTDFPEEDKFDHLPERKATRGPAAFLTVQEGCDKFCAFCVVPYTRGAEVSRPFARLMAEARGLVERGVREITLLGQNVNAWSSDGRGLGGLIRELARIDGLERLRYTTSHPNDMADDLIEAHGAEPKLMPYLHLPVQSGSDRILKAMNRKHTAEHYLRLIERIRAARPDILLTSDFIVGFPGETEADFEATLDLIRAVGFGSAFSFKYSARPGTPAAEKPELPGEVCDARLQRLQALVTEQQRAAQMAMVGREVGVLYEKAGRLPGQMVGKSDHLHAVHVEDKAGRVGDLVRVRITASAPNSLAGERLGA.

The MTTase N-terminal domain occupies 5-121 (RKLFIKTYGC…LPDMLDRTEG (117 aa)). 6 residues coordinate [4Fe-4S] cluster: Cys14, Cys50, Cys84, Cys158, Cys162, and Cys165. The region spanning 144 to 374 (ATRGPAAFLT…TEQQRAAQMA (231 aa)) is the Radical SAM core domain. The 63-residue stretch at 373–435 (MAMVGREVGV…PNSLAGERLG (63 aa)) folds into the TRAM domain.

It belongs to the methylthiotransferase family. MiaB subfamily. As to quaternary structure, monomer. Requires [4Fe-4S] cluster as cofactor.

It is found in the cytoplasm. The catalysed reaction is N(6)-dimethylallyladenosine(37) in tRNA + (sulfur carrier)-SH + AH2 + 2 S-adenosyl-L-methionine = 2-methylsulfanyl-N(6)-dimethylallyladenosine(37) in tRNA + (sulfur carrier)-H + 5'-deoxyadenosine + L-methionine + A + S-adenosyl-L-homocysteine + 2 H(+). In terms of biological role, catalyzes the methylthiolation of N6-(dimethylallyl)adenosine (i(6)A), leading to the formation of 2-methylthio-N6-(dimethylallyl)adenosine (ms(2)i(6)A) at position 37 in tRNAs that read codons beginning with uridine. This Cereibacter sphaeroides (strain ATCC 17029 / ATH 2.4.9) (Rhodobacter sphaeroides) protein is tRNA-2-methylthio-N(6)-dimethylallyladenosine synthase.